A 1374-amino-acid chain; its full sequence is Serine/threonine-protein kinase LMTK1 (1374 aa).

Residues 32-52 form a helical membrane-spanning segment; sequence LAVVAVSFSGLFAVIVLMLAC. Residues 125 to 395 form the Protein kinase domain; sequence LLYLKEIGRG…PTAEEVHLLL (271 aa). Residues 131-139 and Lys-156 each bind ATP; that span reads IGRGWFGKV. Residue Asp-253 is the Proton acceptor of the active site. Ser-495 is modified (phosphoserine). Disordered regions lie at residues 542-622, 667-731, 765-1195, 1245-1302, and 1320-1374; these read GHDP…LAEG, VGAR…LLGL, WTET…PAVP, QESP…AWDD, and AAPA…SKEA. The segment covering 606 to 620 has biased composition (low complexity); sequence PSRSPSPSAGPLSLA. Over residues 680–690 the composition is skewed to polar residues; it reads SNVSANNNSGS. Composition is skewed to low complexity over residues 719 to 731, 801 to 831, and 847 to 856; these read PEPGYPGEPLLGL, SPSQEGAPLPSEEASAPDAPDALPDSPTPAT, and SSSSPEVEAP. A compositionally biased stretch (polar residues) spans 865–878; sequence EATSGIFTDTSSDG. The span at 900-914 shows a compositional bias: low complexity; the sequence is PDSLDSLDIPSSASD. Residues 978–987 show a composition bias toward polar residues; that stretch reads RLSTSLSGLN. Position 1029 is a phosphoserine (Ser-1029). A compositionally biased stretch (polar residues) spans 1063 to 1073; the sequence is EGSSPEPSTCP. Positions 1138 to 1155 are enriched in low complexity; sequence TPRAPLRLALPGLPAALE. Residues 1158-1173 are compositionally biased toward acidic residues; the sequence is PEEEEEDSEDSDESDE. A phosphoserine mark is found at Ser-1168, Ser-1171, Ser-1184, Ser-1187, and Ser-1262. Residues 1272 to 1291 show a composition bias toward polar residues; that stretch reads GSPSAPNRPQQADGSPNGST. A compositionally biased stretch (pro residues) spans 1321–1332; sequence APAPAAPTPTPA. Polar residues predominate over residues 1337–1352; the sequence is FTVSPAPTSRFSITHV. The segment covering 1353-1363 has biased composition (basic and acidic residues); sequence SDSDAESKRGP. Over residues 1365–1374 the composition is skewed to gly residues; it reads AGAGGESKEA.

This sequence belongs to the protein kinase superfamily. Tyr protein kinase family. Interacts with CDK5. Autophosphorylated. Phosphorylated by CDK5. In terms of tissue distribution, expressed in brain.

Its subcellular location is the membrane. It is found in the cytoplasm. It localises to the perinuclear region. The catalysed reaction is L-seryl-[protein] + ATP = O-phospho-L-seryl-[protein] + ADP + H(+). The enzyme catalyses L-threonyl-[protein] + ATP = O-phospho-L-threonyl-[protein] + ADP + H(+). In terms of biological role, may be involved in neuronal differentiation. This Homo sapiens (Human) protein is Serine/threonine-protein kinase LMTK1 (AATK).